A 143-amino-acid chain; its full sequence is Transcriptional regulator MraZ (143 aa).

2 SpoVT-AbrB domains span residues 5 to 47 (EYHH…PIEE) and 76 to 119 (AMES…SAER).

This sequence belongs to the MraZ family. Forms oligomers.

It localises to the cytoplasm. It is found in the nucleoid. This chain is Transcriptional regulator MraZ, found in Lactobacillus gasseri (strain ATCC 33323 / DSM 20243 / BCRC 14619 / CIP 102991 / JCM 1131 / KCTC 3163 / NCIMB 11718 / NCTC 13722 / AM63).